Consider the following 541-residue polypeptide: Chaperonin GroEL (541 aa).

Residues 29–32, 86–90, G413, and D495 contribute to the ATP site; these read TLGP and DGTTT.

The protein belongs to the chaperonin (HSP60) family. In terms of assembly, forms a cylinder of 14 subunits composed of two heptameric rings stacked back-to-back. Interacts with the co-chaperonin GroES.

The protein localises to the cytoplasm. It carries out the reaction ATP + H2O + a folded polypeptide = ADP + phosphate + an unfolded polypeptide.. In terms of biological role, together with its co-chaperonin GroES, plays an essential role in assisting protein folding. The GroEL-GroES system forms a nano-cage that allows encapsulation of the non-native substrate proteins and provides a physical environment optimized to promote and accelerate protein folding. The polypeptide is Chaperonin GroEL (Thermoanaerobacter pseudethanolicus (strain ATCC 33223 / 39E) (Clostridium thermohydrosulfuricum)).